The sequence spans 109 residues: uncharacterized protein (109 aa).

It to M.jannaschii MJ1244 and MJ1245 and M.thermoautotrophicum MTH1110.

This is an uncharacterized protein from Methanococcus maripaludis (Methanococcus deltae).